Here is a 72-residue protein sequence, read N- to C-terminus: Cytochrome b-c1 complex subunit 8 (72 aa).

Over 2-41 (GKQPVKLKAVVYAISPFQQKIMPGLWKDLPGKIHHKVSEN) the chain is Mitochondrial matrix. A helical transmembrane segment spans residues 42–59 (WISATLLLGPLVGTYSYV). Residues 60-72 (QHFLEKEKLEHRY) lie on the Mitochondrial intermembrane side of the membrane.

Belongs to the UQCRQ/QCR8 family. Component of the ubiquinol-cytochrome c oxidoreductase (cytochrome b-c1 complex, complex III, CIII), a multisubunit enzyme composed of 3 respiratory subunits cytochrome b, cytochrome c1 and Rieske protein, 2 core protein subunits, and additional low-molecular weight protein subunits. The complex exists as an obligatory dimer and forms supercomplexes (SCs) in the inner mitochondrial membrane with cytochrome c oxidase (complex IV, CIV).

Its subcellular location is the mitochondrion inner membrane. Functionally, component of the ubiquinol-cytochrome c oxidoreductase, a multisubunit transmembrane complex that is part of the mitochondrial electron transport chain which drives oxidative phosphorylation. The respiratory chain contains 3 multisubunit complexes succinate dehydrogenase (complex II, CII), ubiquinol-cytochrome c oxidoreductase (cytochrome b-c1 complex, complex III, CIII) and cytochrome c oxidase (complex IV, CIV), that cooperate to transfer electrons derived from NADH and succinate to molecular oxygen, creating an electrochemical gradient over the inner membrane that drives transmembrane transport and the ATP synthase. The cytochrome b-c1 complex catalyzes electron transfer from ubiquinol to cytochrome c, linking this redox reaction to translocation of protons across the mitochondrial inner membrane, with protons being carried across the membrane as hydrogens on the quinol. In the process called Q cycle, 2 protons are consumed from the matrix, 4 protons are released into the intermembrane space and 2 electrons are passed to cytochrome c. The protein is Cytochrome b-c1 complex subunit 8 of Solanum tuberosum (Potato).